The sequence spans 828 residues: Molybdenum cofactor sulfurase (828 aa).

An N6-(pyridoxal phosphate)lysine modification is found at Lys239. Cys402 is an active-site residue. The interval 638–682 is disordered; the sequence is TRYTRRSLHSRSSTAALRRQRPVEESSMPGSFPSDTPLSRTPEPP. The MOSC domain occupies 652-825; the sequence is AALRRQRPVE…VMVGDVVRPW (174 aa).

Belongs to the class-V pyridoxal-phosphate-dependent aminotransferase family. MOCOS subfamily. It depends on pyridoxal 5'-phosphate as a cofactor.

The catalysed reaction is Mo-molybdopterin + L-cysteine + AH2 = thio-Mo-molybdopterin + L-alanine + A + H2O. Its function is as follows. Sulfurates the molybdenum cofactor. Sulfation of molybdenum is essential for xanthine dehydrogenase (XDH) and aldehyde oxidase (ADO) enzymes in which molybdenum cofactor is liganded by 1 oxygen and 1 sulfur atom in active form. The polypeptide is Molybdenum cofactor sulfurase (Aspergillus terreus (strain NIH 2624 / FGSC A1156)).